Reading from the N-terminus, the 852-residue chain is Elongation factor 2 (852 aa).

Positions 17 to 356 (RNIRNMSVIA…MIAFHLPSPV (340 aa)) constitute a tr-type G domain. 26–33 (AHVDHGKS) provides a ligand contact to GTP. Residues threonine 57 and threonine 59 each carry the phosphothreonine modification. Residues 170–173 (NKMD) and 227–229 (SGL) contribute to the GTP site. Histidine 709 is subject to Diphthamide.

Belongs to the TRAFAC class translation factor GTPase superfamily. Classic translation factor GTPase family. EF-G/EF-2 subfamily. Phosphorylation by EF-2 kinase completely inactivates EF-2. In terms of processing, AMPylated by fic-1.

It is found in the cytoplasm. The enzyme catalyses GTP + H2O = GDP + phosphate + H(+). Functionally, catalyzes the GTP-dependent ribosomal translocation step during translation elongation. During this step, the ribosome changes from the pre-translocational (PRE) to the post-translocational (POST) state as the newly formed A-site-bound peptidyl-tRNA and P-site-bound deacylated tRNA move to the P and E sites, respectively. Catalyzes the coordinated movement of the two tRNA molecules, the mRNA and conformational changes in the ribosome. Involved in the morphogenesis of epidermal tissues. This Caenorhabditis elegans protein is Elongation factor 2 (eef-2).